The sequence spans 1251 residues: MEDVGVNNDTVHPEARAYITSLVSALGGYGVDDDGGYTLGDDALEVLRDLKRWVRFYDERTNRMDVARCLAESNLVTSDLLQIMAKWVSNESSSKYMERIAFACLEIMVPLTWPIERDSETMTVNHHRHLPVLQLAQLGYKRAIINFDVAPILSTAVRIALPCMAIPNGDRSSRDQATIKLILYFLRNIAMIAPPPGLKYEGDETQVSRSTLIDAFTFQDIFLTILTIASNMGEDFRTEDVIILDIIFHIVKRVDSSKLFVSEKRLHKIKEDELTAAMRKEAAMLKSYNKNAPTRHSRFGTMIWVKRESGKLATVSGQDALLDAATRERKMDSNKSFKPPRRARKEDMEPKDLGPRVSLDERARRQLQSFVSEFLDSGFNPLFSHVRRSLDREAPHVLQSHHSQFFYLVAWFLEAERMRKKAAKDSKNQTSTGEDVGSFNLVAEVLNQEMFITMSRTLDRAYGDKDWRLLTTVMRCFTQILLTIQEMASSGNEENEEIADNILSRLFYEETTHDLIANIVRTYKDQGFEYLDACTELTHTFVRILEAYSKENVDLQVRSRKRTRRKKKAAKAAGDQGDDEGQGDAEDDSADDERQAEKTSQERKFDFKRFALRFAPQGVVDTFVTFTKYYRDLDDSQLKRAHRYFFKLAFKQDMSVMLFRLDIIHLFYNMIKGPEPLDKSSSMYKEWEDLAMQTIRKCVKKLEERPALFTELLFSKITSTAHYLEYGHEKQTISNPRPAAELEFKREVEREQQIAILVGVLIDRSQTDHLGWIKKQLSDAESERRAWENAERALAAERPDDEVMAGSAEAIAAKTPDHVTMRPDTDARRTAMFKNPHLRLLMKLVGLERLAPTLDETPDAIWIIPGTLTADALKETISLINKAEFTPPIFDDGELAEDQLRRKTAPRKRAAYDDDDNLDGINDLINDGSDDDGDDGTGILFPAGGPTARKRTAQDEPPKKRLQRRRRRGGSDDPDADTAETDAQAEARARARRKKELEKARKIKSEMYVDPREDDSDYEGNKERDRLFFAREEERQAVKDATFGLSSRPEGVGEGAWEALVGAVMGGGDGDDGEGEDAVVGERPPKVGGRKRKSGVADLAESGGEDSEEGDEDDESRSEEDGSAVSEAEAPAAAGRRPNKRRKPAQKKKKRVVDISSGEDDDVGMDMDVDVDADADADAMDFTQSSKDGAVTNDTPLSSDPSRTTKPGGAEGSGDKGGGEDEDEDMPVAKPVARARPRARAGFIVESSDEE.

Disordered stretches follow at residues 328–354, 564–601, 901–1021, and 1041–1251; these read ERKMDSNKSFKPPRRARKEDMEPKDLG, RRKKKAAKAAGDQGDDEGQGDAEDDSADDERQAEKTSQ, RRKT…YEGN, and ATFG…SDEE. A compositionally biased stretch (basic and acidic residues) spans 344 to 354; it reads RKEDMEPKDLG. The segment covering 576-591 has biased composition (acidic residues); sequence QGDDEGQGDAEDDSAD. Basic and acidic residues-rich tracts occupy residues 592–601 and 985–1011; these read DERQAEKTSQ and AEARARARRKKELEKARKIKSEMYVDP. Composition is skewed to acidic residues over residues 1069 to 1079 and 1103 to 1122; these read DGDDGEGEDAV and GGEDSEEGDEDDESRSEEDG. A compositionally biased stretch (low complexity) spans 1123-1136; it reads SAVSEAEAPAAAGR. Residues 1137–1151 show a composition bias toward basic residues; that stretch reads RPNKRRKPAQKKKKR. Residues 1157–1179 are compositionally biased toward acidic residues; the sequence is SGEDDDVGMDMDVDVDADADADA. Over residues 1182-1205 the composition is skewed to polar residues; the sequence is FTQSSKDGAVTNDTPLSSDPSRTT.

This sequence belongs to the timeless family. As to quaternary structure, component of the fork protection complex (FPC) consisting of TOF1 and CSM3.

The protein resides in the nucleus. Its function is as follows. Forms a fork protection complex (FPC) with CSM3 and which is required for chromosome segregation during meiosis and DNA damage repair. FPC coordinates leading and lagging strand synthesis and moves with the replication fork. FPC stabilizes replication forks in a configuration that is recognized by replication checkpoint sensors. The protein is Topoisomerase 1-associated factor 1 (TOF1) of Chaetomium globosum (strain ATCC 6205 / CBS 148.51 / DSM 1962 / NBRC 6347 / NRRL 1970) (Soil fungus).